Here is an 866-residue protein sequence, read N- to C-terminus: Fibrinogen alpha chain (866 aa).

Residues 1–19 (MFSMRIVCLVLSVVGTAWT) form the signal peptide. A Phosphoserine modification is found at Ser-22. Residues 36 to 38 (GPR) form an alpha-chain polymerization, binding distal domain of another fibrin gamma chain region. Ser-45 carries the post-translational modification Phosphoserine; by FAM20C. Position 50 is a phosphoserine (Ser-50). Ser-56 is subject to Phosphoserine; by FAM20C. Residues 68–631 (CRMKGLIDEV…GHAKSRPVRD (564 aa)) are a coiled coil. The interval 262-460 (ERPGGNEITR…SGSTTTTRRS (199 aa)) is disordered. A compositionally biased stretch (low complexity) spans 270–299 (TRGGSTSYGTGSETESPRNPSSAGSWNSGS). Residues Ser-281, Ser-291, and Ser-294 each carry the phosphoserine modification. An O-linked (GalNAc...) threonine glycan is attached at Thr-320. Lys-322 is covalently cross-linked (Isoglutamyl lysine isopeptide (Lys-Gln) (interchain with Q-41 in alpha-2-antiplasmin)). Residue Gln-347 forms an Isoglutamyl lysine isopeptide (Gln-Lys) (interchain with K-?) linkage. The O-linked (GalNAc...) serine glycan is linked to Ser-351. Over residues 354-391 (PGSTGTWNPGSSERGSAGHWTSESSVSGSTGQWHSESG) the composition is skewed to polar residues. Ser-364 carries the post-translational modification Phosphoserine; by FAM20C. An Isoglutamyl lysine isopeptide (Gln-Lys) (interchain with K-?) cross-link involves residue Gln-385. Thr-412 is subject to Phosphothreonine. The segment covering 424–449 (TRREYHTEKLVTSKGDKELRTGKEKV) has biased composition (basic and acidic residues). Over residues 450-460 (TSGSTTTTRRS) the composition is skewed to low complexity. Residue Ser-451 is modified to Phosphoserine. Ser-453 carries N-linked (GlcNAc...) asparagine; in variant Caracas-2 glycosylation. Cys-461 and Cys-491 are joined by a disulfide. The residue at position 501 (Ser-501) is a Phosphoserine. The residue at position 505 (Thr-505) is a Phosphothreonine. Ser-524 is modified (phosphoserine; by FAM20C). Residues Lys-527 and Lys-558 each participate in an isoglutamyl lysine isopeptide (Lys-Gln) (interchain with Q-?) cross-link. Positions 543-638 (ETESRGSESG…VRDCDDVLQT (96 aa)) are disordered. At Ser-560 the chain carries Phosphoserine; by FAM20C. Pro-565 carries the post-translational modification 4-hydroxyproline; by P4HA1. Residues Lys-575, Lys-581, and Lys-599 each participate in an isoglutamyl lysine isopeptide (Lys-Gln) (interchain with Q-?) cross-link. Residues 575–589 (KSSSYSKQFTSSTSY) show a composition bias toward low complexity. Residues 594–617 (STFESKSYKMADEAGSEADHEGTH) are compositionally biased toward basic and acidic residues. Position 609 is a phosphoserine; by FAM20C (Ser-609). Residues 618-627 (STKRGHAKSR) show a composition bias toward basic residues. In terms of domain architecture, Fibrinogen C-terminal spans 623–864 (HAKSRPVRDC…AVRMKIRPLV (242 aa)). Asn-686 carries N-linked (GlcNAc...) asparagine glycosylation. Ca(2+) is bound by residues Asp-791, Asp-793, Trp-795, and Glu-797. Cys-799 and Cys-812 are joined by a disulfide.

In terms of assembly, heterohexamer; disulfide linked. Contains 2 sets of 3 non-identical chains (alpha, beta and gamma). The 2 heterotrimers are in head to head conformation with the N-termini in a small central domain. (Microbial infection) Interacts with Staphylococcus aureus protein Fib; this interaction inhibits fibrinogen-dependent platelet aggregation and protects the bacteria form phagocytosis. The alpha chain is normally not N-glycosylated, even though glycosylation at Asn-686 was observed when a fragment of the protein was expressed in insect cells. It is well known that heterologous expression of isolated domains can lead to adventitious protein modifications. Besides, glycosylation at Asn-686 is supported by large-scale glycoproteomics studies, but the evidence is still quite tenuous. Most likely, Asn-686 is not glycosylated in the healthy human body, or only with low efficiency. In terms of processing, O-glycosylated. Post-translationally, forms F13A-mediated cross-links between a glutamine and the epsilon-amino group of a lysine residue, forming fibronectin-fibrinogen heteropolymers. About one-third of the alpha chains in the molecules in blood were found to be phosphorylated. In terms of processing, conversion of fibrinogen to fibrin is triggered by thrombin, which cleaves fibrinopeptides A and B from alpha and beta chains, and thus exposes the N-terminal polymerization sites responsible for the formation of the soft clot. The soft clot is converted into the hard clot by factor XIIIA which catalyzes the epsilon-(gamma-glutamyl)lysine cross-linking between gamma chains (stronger) and between alpha chains (weaker) of different monomers. Post-translationally, phosphorylated by FAM20C in the extracellular medium. In terms of tissue distribution, detected in blood plasma (at protein level).

It is found in the secreted. In terms of biological role, cleaved by the protease thrombin to yield monomers which, together with fibrinogen beta (FGB) and fibrinogen gamma (FGG), polymerize to form an insoluble fibrin matrix. Fibrin has a major function in hemostasis as one of the primary components of blood clots. In addition, functions during the early stages of wound repair to stabilize the lesion and guide cell migration during re-epithelialization. Was originally thought to be essential for platelet aggregation, based on in vitro studies using anticoagulated blood. However, subsequent studies have shown that it is not absolutely required for thrombus formation in vivo. Enhances expression of SELP in activated platelets via an ITGB3-dependent pathway. Maternal fibrinogen is essential for successful pregnancy. Fibrin deposition is also associated with infection, where it protects against IFNG-mediated hemorrhage. May also facilitate the immune response via both innate and T-cell mediated pathways. This chain is Fibrinogen alpha chain (FGA), found in Homo sapiens (Human).